A 169-amino-acid chain; its full sequence is Peptide methionine sulfoxide reductase MsrA (169 aa).

The active site involves cysteine 10.

The protein belongs to the MsrA Met sulfoxide reductase family.

It catalyses the reaction L-methionyl-[protein] + [thioredoxin]-disulfide + H2O = L-methionyl-(S)-S-oxide-[protein] + [thioredoxin]-dithiol. The enzyme catalyses [thioredoxin]-disulfide + L-methionine + H2O = L-methionine (S)-S-oxide + [thioredoxin]-dithiol. Has an important function as a repair enzyme for proteins that have been inactivated by oxidation. Catalyzes the reversible oxidation-reduction of methionine sulfoxide in proteins to methionine. The protein is Peptide methionine sulfoxide reductase MsrA of Streptococcus agalactiae serotype III (strain NEM316).